Consider the following 494-residue polypeptide: NADH-quinone oxidoreductase subunit N (494 aa).

Transmembrane regions (helical) follow at residues 13 to 33 (LIALLPLLVTCMSAIVVMLAI), 43 to 63 (FVLTVLGLNLALLSLLPAMGV), 82 to 102 (MALVLAASLACVTLTHAYLGG), 117 to 137 (LLILLSAAGGLVLASAQHLVG), 138 to 158 (LFIGLELLSVPTYGMIAYAFF), 169 to 189 (YMVLSAAGSAFLLFGMALLYA), 209 to 229 (LLVELGIGMMLIGLAFKLSLV), 243 to 263 (PAPVAAFLATASKVAVFAVLL), 277 to 297 (LNELLTLIAIASILFGNLLAL), 311 to 331 (IAHFGYLLVALIASQGLAVEA), 332 to 352 (IGVYLATYVLTSLGAFGVITL), 380 to 400 (AVLTVMMLSLAGIPLTAGFIG), 412 to 432 (QLWWLLGAMVLGSAIGVFYYL), and 461 to 481 (IMLLVVALLAFFLGVYPQPLL).

It belongs to the complex I subunit 2 family. NDH-1 is composed of 13 different subunits. Subunits NuoA, H, J, K, L, M, N constitute the membrane sector of the complex.

It is found in the cell inner membrane. It carries out the reaction a quinone + NADH + 5 H(+)(in) = a quinol + NAD(+) + 4 H(+)(out). NDH-1 shuttles electrons from NADH, via FMN and iron-sulfur (Fe-S) centers, to quinones in the respiratory chain. The immediate electron acceptor for the enzyme in this species is believed to be ubiquinone. Couples the redox reaction to proton translocation (for every two electrons transferred, four hydrogen ions are translocated across the cytoplasmic membrane), and thus conserves the redox energy in a proton gradient. The chain is NADH-quinone oxidoreductase subunit N from Ectopseudomonas mendocina (strain ymp) (Pseudomonas mendocina).